A 727-amino-acid chain; its full sequence is ADP-ribosylation factor-binding protein GGA3 (727 aa).

A VHS domain is found at 16 to 146; the sequence is ATNPSNRQED…MLKRQGIVQS (131 aa). Phosphoserine occurs at positions 159 and 275. The GAT domain occupies 171–298; it reads DEEKSKLLAK…VINSYKTIIE (128 aa). The interval 299–597 is unstructured hinge; sequence GQIINGEVTT…VHVPLESIKP (299 aa). Residues 334–385 form a disordered region; sequence TPSSSSPVLAPAPAPPTSGIPILPPPPQTSGPPRSRSSSQAEAPSGPDSTNN. Pro residues predominate over residues 343-363; the sequence is APAPAPPTSGIPILPPPPQTS. A compositionally biased stretch (low complexity) spans 364 to 374; sequence GPPRSRSSSQA. A DXXLL motif is present at residues 391 to 395; it reads DEELL. A disordered region spans residues 400–419; it reads SDPAPTAPKESAGNSPWHLF. The GAE domain occupies 598–719; it reads SSALPVTAYD…TELGEVDQFP (122 aa).

The protein belongs to the GGA protein family. As to quaternary structure, monomer. Interacts with GGA1 and GGA2. Binds to clathrin and activated ARFs, such as ARF1, ARF5 and ARF6. Binds RABEP1 and RABGEF1. Interacts with the membrane proteins M6PR/CD-MPR and IGF2R/CI-MPR and the accessory proteins SYNRG, EPN4, NECAP1, NECAP2 and AFTPH/aftiphilin. Interacts with TSG101 and UBC. Interacts with ADRA2B. Interacts with NTRK1; the interaction is independent of NTRK1 activation and ubiquitination. Interacts (via VHS domain) with BACE1 (via DXXLL motif). Post-translationally, phosphorylated by CK2 and dephosphorylated by PP2A. Phosphorylation of GGA3 allows the internal DXXLL motif to bind the VHS domain and to inhibit the recognition of cargo signals. In terms of processing, ubiquitinated. Proteolytically cleaved during apoptosis by CASP3.

It is found in the golgi apparatus. It localises to the trans-Golgi network membrane. Its subcellular location is the endosome membrane. The protein resides in the early endosome membrane. The protein localises to the recycling endosome membrane. In terms of biological role, plays a role in protein sorting and trafficking between the trans-Golgi network (TGN) and endosomes. Mediates the ARF-dependent recruitment of clathrin to the TGN and binds ubiquitinated proteins and membrane cargo molecules with a cytosolic acidic cluster-dileucine (DXXLL) motif. Mediates export of the GPCR receptor ADRA2B to the cell surface. Involved in BACE1 transport and sorting as well as regulation of BACE1 protein levels. Regulates retrograde transport of BACE1 from endosomes to the trans-Golgi network via interaction through the VHS motif and dependent of BACE1 phosphorylation. Modulates BACE1 protein levels independently of the interaction between VHS domain and DXXLL motif through recognition of ubiquitination. Key player in a novel DXXLL-mediated endosomal sorting machinery to the recycling pathway that targets NTRK1 to the plasma membrane. The polypeptide is ADP-ribosylation factor-binding protein GGA3 (Rattus norvegicus (Rat)).